The following is a 252-amino-acid chain: Osmotin-like protein (252 aa).

A signal peptide spans 1 to 24; sequence MASSSAKILLPLSLLFTLLSLSQS.

It is found in the secreted. The protein localises to the cell wall. The chain is Osmotin-like protein from Solanum lycopersicum (Tomato).